Reading from the N-terminus, the 242-residue chain is Ubiquinone biosynthesis O-methyltransferase (242 aa).

4 residues coordinate S-adenosyl-L-methionine: arginine 44, glycine 64, aspartate 85, and methionine 129.

Belongs to the methyltransferase superfamily. UbiG/COQ3 family.

It catalyses the reaction a 3-demethylubiquinol + S-adenosyl-L-methionine = a ubiquinol + S-adenosyl-L-homocysteine + H(+). It carries out the reaction a 3-(all-trans-polyprenyl)benzene-1,2-diol + S-adenosyl-L-methionine = a 2-methoxy-6-(all-trans-polyprenyl)phenol + S-adenosyl-L-homocysteine + H(+). It functions in the pathway cofactor biosynthesis; ubiquinone biosynthesis. Its function is as follows. O-methyltransferase that catalyzes the 2 O-methylation steps in the ubiquinone biosynthetic pathway. The chain is Ubiquinone biosynthesis O-methyltransferase from Yersinia pseudotuberculosis serotype O:1b (strain IP 31758).